The sequence spans 93 residues: Phosphoribosyl-ATP pyrophosphatase (93 aa).

It belongs to the PRA-PH family.

It localises to the cytoplasm. It carries out the reaction 1-(5-phospho-beta-D-ribosyl)-ATP + H2O = 1-(5-phospho-beta-D-ribosyl)-5'-AMP + diphosphate + H(+). It participates in amino-acid biosynthesis; L-histidine biosynthesis; L-histidine from 5-phospho-alpha-D-ribose 1-diphosphate: step 2/9. In Mycolicibacterium paratuberculosis (strain ATCC BAA-968 / K-10) (Mycobacterium paratuberculosis), this protein is Phosphoribosyl-ATP pyrophosphatase.